The sequence spans 397 residues: Phosphoglycerate kinase (397 aa).

Residues 21 to 23 (DFN), Arg-36, 59 to 62 (HLGR), Arg-118, and Arg-151 each bind substrate. ATP contacts are provided by residues Lys-202, Gly-293, Glu-324, and 353 to 356 (GGDS).

This sequence belongs to the phosphoglycerate kinase family. In terms of assembly, monomer.

Its subcellular location is the cytoplasm. It carries out the reaction (2R)-3-phosphoglycerate + ATP = (2R)-3-phospho-glyceroyl phosphate + ADP. The protein operates within carbohydrate degradation; glycolysis; pyruvate from D-glyceraldehyde 3-phosphate: step 2/5. This is Phosphoglycerate kinase from Chloroherpeton thalassium (strain ATCC 35110 / GB-78).